The sequence spans 540 residues: MNPSTAQAHAVVDELIRGGVRDVVLCPGSRNAPLAFALHDADKAGRLRLHVRIDERTAGFLAVGLAAASGSPVPVAMTSGTAVANLGPAVVEANYARVPLIVLSANRPYELLGTGANQTMEQLGYFGTQVRAAISIGLAEEGSEKIEAQNPHWRSATCRVLAAAKGSRTANAGPVQFDIPLREPLVPDRDGGPIPAGRPGGAPWTYTPDVTFDEPVEIDLTADTVVIAGHGAATHPNLSMLPTVAEPTAPQPDNPVHPLALTLLHPQQVIMLGRPTLHRQVSSLLADSRIPVYALTTGPRWPDVSGNSQATGTRAVTSGSPDPAWLQRCAHAHHKALDAVRGQLSTHPLTTGLHVAAHVCGSLRDGDQLVLGASNPVRDAALVPWGAKDVRVRSNRGVAGIDGTVSTAIGAALAHRGGRTVALIGDLTFVHDSSGLLIGPTEPRPENLTIVVSNDNGGGIFELLEQGDPRFHDVSSRIFGTPHDVDIAALCRAYHVDSQSISVEELGPALDEPARGIRVLEVKADRSTLRELHAAIRAAL.

The protein belongs to the TPP enzyme family. MenD subfamily. In terms of assembly, homodimer. It depends on Mg(2+) as a cofactor. Mn(2+) is required as a cofactor. Requires thiamine diphosphate as cofactor.

It catalyses the reaction isochorismate + 2-oxoglutarate + H(+) = 5-enolpyruvoyl-6-hydroxy-2-succinyl-cyclohex-3-ene-1-carboxylate + CO2. It participates in quinol/quinone metabolism; 1,4-dihydroxy-2-naphthoate biosynthesis; 1,4-dihydroxy-2-naphthoate from chorismate: step 2/7. It functions in the pathway quinol/quinone metabolism; menaquinone biosynthesis. Its function is as follows. Catalyzes the thiamine diphosphate-dependent decarboxylation of 2-oxoglutarate and the subsequent addition of the resulting succinic semialdehyde-thiamine pyrophosphate anion to isochorismate to yield 2-succinyl-5-enolpyruvyl-6-hydroxy-3-cyclohexene-1-carboxylate (SEPHCHC). In Mycobacteroides abscessus (strain ATCC 19977 / DSM 44196 / CCUG 20993 / CIP 104536 / JCM 13569 / NCTC 13031 / TMC 1543 / L948) (Mycobacterium abscessus), this protein is 2-succinyl-5-enolpyruvyl-6-hydroxy-3-cyclohexene-1-carboxylate synthase.